A 357-amino-acid polypeptide reads, in one-letter code: bZIP transcription factor 23 (357 aa).

Positions 166 to 185 (PPVPPAPTPTAAAVPPPPPP) are disordered. Residues 275–338 (VERRQRRMIK…KNEVLERMSR (64 aa)) form the bZIP domain. The tract at residues 277-296 (RRQRRMIKNRESAARSRQRK) is basic motif. A leucine-zipper region spans residues 303–317 (LEAEVAKLKELNDEL).

It belongs to the bZIP family. ABI5 subfamily. Highly expressed in leaves.

It localises to the nucleus. Its function is as follows. Transcriptional activator that mediates abscisic acid (ABA) signaling. Can regulate the expression of a wide spectrum of stress-related genes in response to abiotic stresses through an ABA-dependent regulation pathway. Confers ABA-dependent drought and salinity tolerance. Binds specifically to the ABA-responsive elements (ABRE) in the promoter of target genes to mediate stress-responsive ABA signaling. The protein is bZIP transcription factor 23 of Oryza sativa subsp. japonica (Rice).